Consider the following 426-residue polypeptide: Putative F-box protein At4g38870 (426 aa).

Residues 47 to 92 (SVNSELLPVDLIMEILKKLSLKPLIRFLCVSKLWASIIRDPYFMKL) enclose the F-box domain.

This chain is Putative F-box protein At4g38870, found in Arabidopsis thaliana (Mouse-ear cress).